Here is a 279-residue protein sequence, read N- to C-terminus: Pantothenate synthetase (279 aa).

Residue 26 to 33 (MGNLHDGH) participates in ATP binding. The active-site Proton donor is H33. Q57 serves as a coordination point for (R)-pantoate. Residue Q57 coordinates beta-alanine. 144 to 147 (GKKD) is a binding site for ATP. Q150 serves as a coordination point for (R)-pantoate. 181–184 (LSSR) is an ATP binding site.

Belongs to the pantothenate synthetase family. Homodimer.

The protein localises to the cytoplasm. The catalysed reaction is (R)-pantoate + beta-alanine + ATP = (R)-pantothenate + AMP + diphosphate + H(+). The protein operates within cofactor biosynthesis; (R)-pantothenate biosynthesis; (R)-pantothenate from (R)-pantoate and beta-alanine: step 1/1. Functionally, catalyzes the condensation of pantoate with beta-alanine in an ATP-dependent reaction via a pantoyl-adenylate intermediate. The chain is Pantothenate synthetase from Herminiimonas arsenicoxydans.